The following is an 883-amino-acid chain: Alanine--tRNA ligase (883 aa).

Residues His-560, His-564, Cys-665, and His-669 each contribute to the Zn(2+) site.

This sequence belongs to the class-II aminoacyl-tRNA synthetase family. Requires Zn(2+) as cofactor.

The protein localises to the cytoplasm. The enzyme catalyses tRNA(Ala) + L-alanine + ATP = L-alanyl-tRNA(Ala) + AMP + diphosphate. In terms of biological role, catalyzes the attachment of alanine to tRNA(Ala) in a two-step reaction: alanine is first activated by ATP to form Ala-AMP and then transferred to the acceptor end of tRNA(Ala). Also edits incorrectly charged Ser-tRNA(Ala) and Gly-tRNA(Ala) via its editing domain. The sequence is that of Alanine--tRNA ligase from Mesomycoplasma hyopneumoniae (strain J / ATCC 25934 / NCTC 10110) (Mycoplasma hyopneumoniae).